Consider the following 360-residue polypeptide: (+)-6a-hydroxymaackiain 3-O-methyltransferase 1 (360 aa).

Residues 202-205 (VAGG), Asp226, 226-227 (DQ), 246-247 (DM), and Lys260 contribute to the S-adenosyl-L-methionine site. His264 serves as the catalytic Proton acceptor.

The protein belongs to the class I-like SAM-binding methyltransferase superfamily. Cation-independent O-methyltransferase family. COMT subfamily.

It carries out the reaction (+)-6a-hydroxymaackiain + S-adenosyl-L-methionine = (+)-pisatin + S-adenosyl-L-homocysteine + H(+). The enzyme catalyses a 4'-hydroxyisoflavone + S-adenosyl-L-methionine = a 4'-methoxyisoflavone + S-adenosyl-L-homocysteine + H(+). Functionally, methyltransferase involved in the phytoalexin pisatin biosynthesis. Has both 3- and 4'-O-methyltransferase activities. Can use (+)-6a-hydroxymaackiain, 2,7,4'-trihydroxyisoflavanone and with much less activity (+)-medicarpin as substrates, but not (-)-6a-hydroxymaackiain, daidzein, formononetin or isoliquiritigenin. May be involved in formononetin biosynthesis. The sequence is that of (+)-6a-hydroxymaackiain 3-O-methyltransferase 1 (HMM1) from Pisum sativum (Garden pea).